A 1335-amino-acid chain; its full sequence is Regulatory-associated protein of mTOR (1335 aa).

2 positions are modified to phosphoserine: S44 and S122. The residue at position 696 (S696) is a Phosphoserine; by MAPK8. O-linked (GlcNAc) threonine glycosylation occurs at T700. A Phosphothreonine; by MAPK8 modification is found at T706. Residues S719 and S721 each carry the phosphoserine; by RPS6KA1 modification. At S722 the chain carries Phosphoserine; by AMPK and RPS6KA1. S738 carries the post-translational modification Phosphoserine. S791 bears the Phosphoserine; by PKA mark. S792 carries the phosphoserine; by AMPK modification. A phosphoserine mark is found at S836 and S855. The disordered stretch occupies residues 850 to 943 (VLDTSSLTQS…PEQTADDADD (94 aa)). Polar residues predominate over residues 851–866 (LDTSSLTQSAPASPTN). S859 carries the post-translational modification Phosphoserine; by MTOR. S863 is modified (phosphoserine; by MAPK8, MTOR and NLK). Phosphothreonine is present on T865. Over residues 874 to 887 (AGGSPPASSTSSSS) the composition is skewed to low complexity. S877 carries the post-translational modification Phosphoserine; by TBK1. Glycyl lysine isopeptide (Lys-Gly) (interchain with G-Cter in ubiquitin) cross-links involve residues K932 and K948. S982 is subject to Phosphoserine. 7 WD repeats span residues 1020 to 1061 (NRNP…DYFH), 1065 to 1106 (PRYT…EKNP), 1121 to 1160 (TTRG…KVQD), 1164 to 1203 (GADS…SECR), 1209 to 1249 (EHTA…SVNV), 1251 to 1291 (QIVK…NNIK), and 1299 to 1335 (QRVG…KRVR). N6-acetyllysine is present on K1097.

The protein belongs to the WD repeat RAPTOR family. As to quaternary structure, part of the mechanistic target of rapamycin complex 1 (mTORC1) which contains MTOR, MLST8 and RPTOR. mTORC1 associates with AKT1S1/PRAS40, which inhibits its activity. mTORC1 associates with DEPTOR, which regulates its activity. mTORC1 binds to and is inhibited by FKBP12-rapamycin. Forms a complex with MTOR under both leucine-rich and -poor conditions. Interacts with (via TOS motifs) EIF4EBP1 and RPS6KB1; interaction is independent of its association with MTOR. Binds preferentially to poorly or non-phosphorylated forms of EIF4EBP1, and this binding is critical to the ability of MTOR to catalyze phosphorylation. Interacts with ULK1 in a nutrient-dependent manner; the interaction is reduced during starvation. Interacts with GTP-bound form of RagA/RRAGA or RagB/RRAGB and GDP-bound form of RagC/RRAGC or RagD/RRAGD, promoting recruitment of mTORC1 to the lysosomes. Interacts (when phosphorylated by AMPK) with 14-3-3 protein, leading to inhibition of its activity. Interacts with SPAG5; SPAG5 competes with MTOR for RPTOR-binding, resulting in decreased mTORC1 formation. Interacts with WAC; WAC positively regulates MTOR activity by promoting the assembly of the TTT complex composed of TELO2, TTI1 and TTI2 and the RUVBL complex composed of RUVBL1 and RUVBL2 into the TTT-RUVBL complex which leads to the dimerization of the mTORC1 complex and its subsequent activation. Interacts with G3BP1. The complex formed with G3BP1 and SPAG5 is increased by oxidative stress. Interacts with HTR6. Interacts with PIH1D1. Interacts with LARP1. Interacts with BRAT1. Interacts with SIK3. Interacts with SLC38A7; this interaction mediates the recruitment of mTORC1 to the lysosome and its subsequent activation. In terms of assembly, (Microbial infection) Interacts with vaccinia virus protein F17; this interaction dysregulates mTOR. In terms of processing, insulin-stimulated phosphorylation at Ser-863 by MTOR and MAPK8 regulates mTORC1 activity. Phosphorylated at Ser-863 by NLK in response to stress, disrupting the interaction with small GTPases Rag (RagA/RRAGA, RagB/RRAGB, RagC/RRAGC and/or RagD/RRAGD), thereby preventing lysosome recruitment and activation of the mTORC1 complex. Osmotic stress also induces phosphorylation at Ser-696, Thr-706 and Ser-863 by MAPK8. Ser-863 phosphorylation is required for phosphorylation at Ser-855 and Ser-859. In response to nutrient limitation, phosphorylated at Ser-722 and Ser-792 by AMPK; phosphorylation promotes interaction with 14-3-3 proteins, leading to negative regulation of the mTORC1 complex. Phosphorylation at Ser-722 and Ser-792 by AMPK in response to glucose starvation inhibits O-GlcNAcylation by OGT and subsequent activation of mTORC1. In response to growth factors, phosphorylated at Ser-719, Ser-721 and Ser-722 by RPS6KA1, which stimulates mTORC1 activity. Phosphorylation at Ser-791 by PKA downstream of cAMP inhibits the mTORC1 complex. Phosphorylated at Ser-877 by TBK1, leading to negative regulation of the mTORC1 complex. O-GlcNAcylated by OGT upon glucose sufficiency, promoting interaction with small GTPases Rag (RagA/RRAGA, RagB/RRAGB, RagC/RRAGC and/or RagD/RRAGD) and subsequent recruitment of mTORC1 to lysosomal membranes, leading to activation of the mTORC1 complex. Phosphorylation at Ser-722 and Ser-792 by AMPK in response to glucose starvation inhibits O-GlcNAcylation. Post-translationally, acetylation at Lys-1097 by EP300/p300 in response to leucine metabolite acetyl-coA promotes its activity, leading to activation of the mTORC1 complex. Acetylation is decreased in response to fasting. In terms of processing, ubiquitinated, leading to its degradation by the proteasome. Deubiquitinated by OTUB1 via a non-catalytic mechanism. Ubiquitinated by an E3 ubiquitin ligase complex containing VHL. As to expression, highly expressed in skeletal muscle, and in a lesser extent in brain, lung, small intestine, kidney and placenta. In terms of tissue distribution, widely expressed, with highest levels in nasal mucosa and pituitary and lowest in spleen.

It localises to the lysosome membrane. The protein resides in the cytoplasm. The protein localises to the cytoplasmic granule. Functionally, component of the mechanistic target of rapamycin complex 1 (mTORC1), an evolutionarily conserved central nutrient sensor that stimulates anabolic reactions and macromolecule biosynthesis to promote cellular biomass generation and growth. In response to nutrients, growth factors or amino acids, mTORC1 is recruited to the lysosome membrane and promotes protein, lipid and nucleotide synthesis by phosphorylating several substrates, such as ribosomal protein S6 kinase (RPS6KB1 and RPS6KB2) and EIF4EBP1 (4E-BP1). In the same time, it inhibits catabolic pathways by phosphorylating the autophagy initiation components ULK1 and ATG13, as well as transcription factor TFEB, a master regulators of lysosomal biogenesis and autophagy. The mTORC1 complex is inhibited in response to starvation and amino acid depletion. Within the mTORC1 complex, RPTOR acts both as a molecular adapter, which (1) mediates recruitment of mTORC1 to lysosomal membranes via interaction with small GTPases Rag (RagA/RRAGA, RagB/RRAGB, RagC/RRAGC and/or RagD/RRAGD), and a (2) substrate-specific adapter, which promotes substrate specificity by binding to TOS motif-containing proteins and direct them towards the active site of the MTOR kinase domain for phosphorylation. mTORC1 complex regulates many cellular processes, such as odontoblast and osteoclast differentiation or neuronal transmission. mTORC1 complex in excitatory neuronal transmission is required for the prosocial behavior induced by the psychoactive substance lysergic acid diethylamide (LSD). In Homo sapiens (Human), this protein is Regulatory-associated protein of mTOR.